The following is a 475-amino-acid chain: uncharacterized protein (475 aa).

2 consecutive 4Fe-4S ferredoxin-type domains span residues 303 to 333 (ASEF…GHGY) and 352 to 381 (YKDF…LSKL). Residues Cys-312, Cys-315, Cys-318, Cys-322, Cys-362, Cys-365, Cys-368, and Cys-372 each coordinate [4Fe-4S] cluster.

The protein belongs to the LutB/YkgF family.

This is an uncharacterized protein from Escherichia coli (strain K12).